We begin with the raw amino-acid sequence, 428 residues long: GTPase Obg (428 aa).

Residues 1–158 (MFVDQVKIYV…RDVILELKVL (158 aa)) form the Obg domain. The OBG-type G domain occupies 159–329 (ADVGLVGFPS…LLFEVANLLE (171 aa)). GTP-binding positions include 165–172 (GFPSVGKS), 190–194 (FTTIV), 212–215 (DLPG), 282–285 (NKMD), and 310–312 (SAV). The Mg(2+) site is built by S172 and T192. One can recognise an OCT domain in the interval 350-428 (KLETEGVKFD…ILEYEFEFID (79 aa)).

Belongs to the TRAFAC class OBG-HflX-like GTPase superfamily. OBG GTPase family. Monomer. Requires Mg(2+) as cofactor.

It localises to the cytoplasm. Its function is as follows. An essential GTPase which binds GTP, GDP and possibly (p)ppGpp with moderate affinity, with high nucleotide exchange rates and a fairly low GTP hydrolysis rate. Plays a role in control of the cell cycle, stress response, ribosome biogenesis and in those bacteria that undergo differentiation, in morphogenesis control. The chain is GTPase Obg from Bacillus cereus (strain Q1).